We begin with the raw amino-acid sequence, 344 residues long: Putative cyclin-Y-like protein 3 (344 aa).

In terms of domain architecture, Cyclin N-terminal spans 40-170 (ERYANRSLAI…FLELLEFNIH (131 aa)).

The protein belongs to the cyclin family. Cyclin Y subfamily.

The chain is Putative cyclin-Y-like protein 3 (CCNYL3) from Homo sapiens (Human).